The primary structure comprises 94 residues: Pyrimidine/purine nucleoside phosphorylase (94 aa).

Belongs to the nucleoside phosphorylase PpnP family.

It catalyses the reaction a purine D-ribonucleoside + phosphate = a purine nucleobase + alpha-D-ribose 1-phosphate. The catalysed reaction is adenosine + phosphate = alpha-D-ribose 1-phosphate + adenine. It carries out the reaction cytidine + phosphate = cytosine + alpha-D-ribose 1-phosphate. The enzyme catalyses guanosine + phosphate = alpha-D-ribose 1-phosphate + guanine. It catalyses the reaction inosine + phosphate = alpha-D-ribose 1-phosphate + hypoxanthine. The catalysed reaction is thymidine + phosphate = 2-deoxy-alpha-D-ribose 1-phosphate + thymine. It carries out the reaction uridine + phosphate = alpha-D-ribose 1-phosphate + uracil. The enzyme catalyses xanthosine + phosphate = alpha-D-ribose 1-phosphate + xanthine. In terms of biological role, catalyzes the phosphorolysis of diverse nucleosides, yielding D-ribose 1-phosphate and the respective free bases. Can use uridine, adenosine, guanosine, cytidine, thymidine, inosine and xanthosine as substrates. Also catalyzes the reverse reactions. The chain is Pyrimidine/purine nucleoside phosphorylase from Pseudomonas putida (strain W619).